A 114-amino-acid polypeptide reads, in one-letter code: EVQLQQSGAELVKAGSSVKMSCKATGYTFSSYELYWVRQAPGQGLEDLGYISSSSAYPNYAQKFQGRVTITADESTNTAYMELSSLRSEDTAVYFCAVRVISRYFDGWGQGTLV.

Positions 1–106 constitute an Ig-like domain; the sequence is EVQLQQSGAE…AVRVISRYFD (106 aa).

The polypeptide is Ig heavy chain V region (Mus musculus (Mouse)).